The sequence spans 145 residues: Putative pre-16S rRNA nuclease (145 aa).

Belongs to the YqgF nuclease family.

It is found in the cytoplasm. Functionally, could be a nuclease involved in processing of the 5'-end of pre-16S rRNA. This is Putative pre-16S rRNA nuclease from Levilactobacillus brevis (strain ATCC 367 / BCRC 12310 / CIP 105137 / JCM 1170 / LMG 11437 / NCIMB 947 / NCTC 947) (Lactobacillus brevis).